The chain runs to 1130 residues: Alpha-mannosidase 2 (1130 aa).

The Cytoplasmic segment spans residues 1–14 (MRTRVLRCRPFSTR). The chain crosses the membrane as a helical; Signal-anchor for type II membrane protein span at residues 15–35 (ILLLLLFVLAFGVYCYFYNAS). The Lumenal segment spans residues 36–1130 (PQNYNKPRIS…MEVKTYKIRF (1095 aa)). The N-linked (GlcNAc...) asparagine glycan is linked to N117. Residues H133 and D135 each coordinate Zn(2+). N-linked (GlcNAc...) asparagine glycosylation is present at N166. Zn(2+) is bound by residues D247 and H527. D247 (nucleophile) is an active-site residue. N622, N683, N1056, and N1095 each carry an N-linked (GlcNAc...) asparagine glycan.

The protein belongs to the glycosyl hydrolase 38 family. In terms of assembly, homodimer; disulfide-linked. The cofactor is Zn(2+). Post-translationally, N-glycosylated.

The protein localises to the microsome membrane. Its subcellular location is the golgi apparatus membrane. It catalyses the reaction N(4)-{beta-D-GlcNAc-(1-&gt;2)-alpha-D-Man-(1-&gt;3)-[alpha-D-Man-(1-&gt;3)-[alpha-D-Man-(1-&gt;6)]-alpha-D-Man-(1-&gt;6)]-beta-D-Man-(1-&gt;4)-beta-D-GlcNAc-(1-&gt;4)-beta-D-GlcNAc}-L-asparaginyl-[protein] + 2 H2O = 2 alpha-D-mannopyranose + an N(4)-{beta-D-GlcNAc-(1-&gt;2)-alpha-D-Man-(1-&gt;3)-[alpha-D-Man-(1-&gt;6)]-beta-D-Man-(1-&gt;4)-beta-D-GlcNAc-(1-&gt;4)-beta-D-GlcNAc}-L-asparaginyl-[protein]. It functions in the pathway protein modification; protein glycosylation. Inhibited by swainsonine. Catalyzes the first committed step in the biosynthesis of complex N-glycans. It controls conversion of high mannose to complex N-glycans; the final hydrolytic step in the N-glycan maturation pathway. The sequence is that of Alpha-mannosidase 2 from Spodoptera frugiperda (Fall armyworm).